The chain runs to 105 residues: ESAT-6-like protein EsxB (105 aa).

A disordered region spans residues 1–23; that stretch reads MSQGFKTEADVMRNTAHRVDDTN. Residues 7–21 are compositionally biased toward basic and acidic residues; that stretch reads TEADVMRNTAHRVDD.

This sequence belongs to the WXG100 family. CFP-10 subfamily. As to quaternary structure, forms a tight 1:1 complex with EsxB.

The protein is ESAT-6-like protein EsxB of Corynebacterium diphtheriae (strain ATCC 700971 / NCTC 13129 / Biotype gravis).